Consider the following 533-residue polypeptide: Probable metalloreductase AIM14 (533 aa).

Helical transmembrane passes span 17-37 (IPYGYYTATVSLIFIILLIGA), 61-81 (GGSPLLYLVVLFVALLVPFVH), 102-122 (VLATLNLFLTLRPNFLLPGYV), 136-156 (SLCLLALVHGVGFLVKWALDS), 168-188 (IPNLAGLVVGALMAFMVLLSV), 198-218 (SFYLTHIIGAWVFVFLTAYHA), and 220-240 (PGVFVPYTLLNAGLFVFYILS). A Ferric oxidoreductase domain is found at 96 to 213 (LGRLSYVLAT…IIGAWVFVFL (118 aa)). The FAD-binding FR-type domain occupies 240-366 (SKTVPARGVE…GGSGLSYALP (127 aa)).

It belongs to the ferric reductase (FRE) family. AIM14 subfamily.

It localises to the membrane. Functionally, probable cell surface metalloreductase. May be involved in iron or copper homeostasis. The sequence is that of Probable metalloreductase AIM14 (AIM14) from Lachancea thermotolerans (strain ATCC 56472 / CBS 6340 / NRRL Y-8284) (Yeast).